The following is a 141-amino-acid chain: Nucleoside diphosphate kinase (141 aa).

The ATP site is built by K11, F59, R87, T93, R104, and N114. The active-site Pros-phosphohistidine intermediate is the H117.

It belongs to the NDK family. In terms of assembly, homotetramer. Requires Mg(2+) as cofactor.

Its subcellular location is the cytoplasm. The enzyme catalyses a 2'-deoxyribonucleoside 5'-diphosphate + ATP = a 2'-deoxyribonucleoside 5'-triphosphate + ADP. It carries out the reaction a ribonucleoside 5'-diphosphate + ATP = a ribonucleoside 5'-triphosphate + ADP. Functionally, major role in the synthesis of nucleoside triphosphates other than ATP. The ATP gamma phosphate is transferred to the NDP beta phosphate via a ping-pong mechanism, using a phosphorylated active-site intermediate. This chain is Nucleoside diphosphate kinase, found in Acidovorax sp. (strain JS42).